A 224-amino-acid chain; its full sequence is Urease accessory protein UreF (224 aa).

The protein belongs to the UreF family. UreD, UreF and UreG form a complex that acts as a GTP-hydrolysis-dependent molecular chaperone, activating the urease apoprotein by helping to assemble the nickel containing metallocenter of UreC. The UreE protein probably delivers the nickel.

It localises to the cytoplasm. Functionally, required for maturation of urease via the functional incorporation of the urease nickel metallocenter. This Pseudomonas putida (strain W619) protein is Urease accessory protein UreF.